A 269-amino-acid polypeptide reads, in one-letter code: Formamidopyrimidine-DNA glycosylase (269 aa).

Pro-2 (schiff-base intermediate with DNA) is an active-site residue. The active-site Proton donor is the Glu-3. Lys-57 acts as the Proton donor; for beta-elimination activity in catalysis. DNA contacts are provided by His-90, Arg-109, and Lys-150. The FPG-type zinc-finger motif lies at 235–269 (QVYGRKGEPCRVCGTPIVATKHAQRATFYCRQCQK). The active-site Proton donor; for delta-elimination activity is Arg-259.

This sequence belongs to the FPG family. In terms of assembly, monomer. Zn(2+) is required as a cofactor.

It catalyses the reaction Hydrolysis of DNA containing ring-opened 7-methylguanine residues, releasing 2,6-diamino-4-hydroxy-5-(N-methyl)formamidopyrimidine.. It carries out the reaction 2'-deoxyribonucleotide-(2'-deoxyribose 5'-phosphate)-2'-deoxyribonucleotide-DNA = a 3'-end 2'-deoxyribonucleotide-(2,3-dehydro-2,3-deoxyribose 5'-phosphate)-DNA + a 5'-end 5'-phospho-2'-deoxyribonucleoside-DNA + H(+). Involved in base excision repair of DNA damaged by oxidation or by mutagenic agents. Acts as a DNA glycosylase that recognizes and removes damaged bases. Has a preference for oxidized purines, such as 7,8-dihydro-8-oxoguanine (8-oxoG). Has AP (apurinic/apyrimidinic) lyase activity and introduces nicks in the DNA strand. Cleaves the DNA backbone by beta-delta elimination to generate a single-strand break at the site of the removed base with both 3'- and 5'-phosphates. The polypeptide is Formamidopyrimidine-DNA glycosylase (Shigella dysenteriae serotype 1 (strain Sd197)).